We begin with the raw amino-acid sequence, 2395 residues long: MPATPVRASSTRISRRTSSRSVADDQPSTSSAVAPPPSPIAIETDEDAVVEEEKKKKKTSDDLEIITPRTPVDRRIPYICSILLTENRSIRDKLVLSSGPVRQEDHEEQIARAQRIQPVVDQIQRVEQIILNGSVEDILKDPRFAVMADLTKEPPPTPAPPPPIQKTMQPIEVKIEDSEGSNTAQPSVLPSCGGGETNVERAAKREAHVLARIAELRKNGLWSNSRLPKCVEPERNKTHWDYLLEEVKWMAVDFRTETNTKRKIAKVIAHAIAKQHRDKQIEIERAAEREIKEKRKMCAGIAKMVRDFWSSTDKVVDIRAKEVLESRLRKARNKHLMFVIGQVDEMSNIVQEGLVSSSKSPSIASDRDDKDEEFKAPGSDSESDDEQTIANAEKSQKKEDVRQEVDALQNEATVDMDDFLYTLPPEYLKAYGLTQEDLEEMKREKLEEQKARKEACGDNEEKMEIDESPSSDAQKPSTSSSDLTAEQLQDPTAEDGNGDGHGVLENVDYVKLNSQDSDERQQELANIAEEALKFQPKGYTLETTQVKTPVPFLIRGQLREYQMVGLDWMVTLYEKNLNGILADEMGLGKTIQTISLLAHMACSESIWGPHLIVVPTSVILNWEMEFKKWCPALKILTYFGTAKERAEKRKGWMKPNCFHVCITSYKTVTQDIRAFKQRAWQYLILDEAQNIKNWKSQRWQALLNVRARRRLLLTGTPLQNSLMELWSLMHFLMPTIFSSHDDFKDWFSNPLTGMMEGNMEFNAPLIGRLHKVLRPFILRRLKKEVEKQLPEKTEHIVNCSLSKRQRYLYDDFMSRRSTKENLKSGNMMSVLNIVMQLRKCCNHPNLFEPRPVVAPFVVEKLQLDVPARLFEISQQDPSSSSASQIPEIFNLSKIGYQSSVRSAKPLIEELEAMSTYPEPRAPEVGGFRFNRTAFVAKNPHTEESEDEGVMRSRVLPKPINGTAQPLQNGNSIPQNAPNRPQTSCIRSKTVVNTVPLTISTDRSGFHFNMANVGRGVVRLDDSARMSPPLKRQKLTGTATNWSDYVPRHVVEKMEESRKNQLEIVRRRFEMIRAPIIPLEMVALVREEIIAEFPRLAVEEDEVVQERLLEYCELLVQRFGMYVEPVLTDAWQCRPSSSGLPSYIRNNLSNIELNSRSLLLNTSTNFDTRMSISRALQFPELRLIEYDCGKLQTLAVLLRQLYLYKHRCLIFTQMSKMLDVLQTFLSHHGYQYFRLDGTTGVEQRQAMMERFNADPKVFCFILSTRSGGVGVNLTGADTVIFYDSDWNPTMDAQAQDRCHRIGQTRNVSIYRLISERTIEENILRKATQKRRLGELAIDEAGFTPEFFKQSDSIRDLFDGENVEVTAVADVATTMSEKEMEVAMAKCEDEADVNAAKIAVAEANVDNAEFDEKSLPPMSNLQGDEEADEKYMELIQQLKPIERYAINFLETQYKPEFEEECKEAEALIDQKREEWDKNLNDTAVIDLDDSDSLLLNDPSTSADFYQSSSLLDEIKFYDELDDIMPIWLPPSPPDSDADFDLRMEDDCLDLMYEIEQMNEARLPQVCHEMRRPLAEKQQKQNTLNAFNDILSAKEKESVYDAVNKCLQMPQSEAITAESAASPAYTEHSSFSMDDTSQDAKIEPSLTENQQPTTTATTTTTVPQQQQQQQQQKSSKKKRNDNRTAQNRTAENGVKRATTPPPSWREEPDYDGAEWNIVEDYALLQAVQVEFANAHLVEKSANEGMVLNWEFVSNAVNKQTRFFRSARQCSIRYQMFVRPKELGQLVASDPISKKTMKVDLSHTELSHLRKGRMTTESQYAHDYGILTDKKHVNRFKSVRVAATRRPVQFWRGPKALESRNLQSLNGGMPPRHESRLAEFDVKTNIRLDAEDIVTMSDESIVAYEASKKKLLASRQTKPSPRQDVRFHTLVLRPYTVPVTTEYSAAPSRREMRIAVPPLQPSALSTISSVAAAATSGPLPSIQHLQSSSTGLGSQQNLQNSHNSEQRNNVQNMHQNQYNSSQNPPIPIRQIGAASSHQHDQGSQGPGGKPQAYHLVQQGSQQQQQQQQQATLQRRNAAAAAGSNVQFIQQQQQQQQSGKNCGQGQSFVVMGSQSSSNDGQGGASTVGGGGGGSQQPHQQQQQQPQQRIQYIPQVTGSGNNGGGGGRGGYGSTLVMPRGGRVVRPAGTLPGGGRLYVDHNRHPYPMSSNVVPVRVLPATQQGQQRMMTGQRRPAPAPGTVAAMVLPNRGAGGIPQMRSLQRGSYTGGGGQQRINVMVQPQQMRSNNGGGVGGQGGLQGGPGGPQGIRRPLVGRPLQRGVDNQAPTVAQVVVAPPQGMQQASQGPPVLHMQRAVSMQMPTSHHHQGQQQAPPQSSQQASQQAPTSDSGTSAPPRQAPPPQN.

A compositionally biased stretch (low complexity) spans 1-12 (MPATPVRASSTR). The segment at 1-62 (MPATPVRASS…EKKKKKTSDD (62 aa)) is disordered. The 74-residue stretch at 227–300 (LPKCVEPERN…IKEKRKMCAG (74 aa)) folds into the HSA domain. Positions 354–363 (LVSSSKSPSI) are enriched in polar residues. Disordered stretches follow at residues 354–404 (LVSS…VRQE) and 444–504 (EKLE…HGVL). Basic and acidic residues-rich tracts occupy residues 365–375 (SDRDDKDEEFK), 394–404 (KSQKKEDVRQE), and 444–462 (EKLEEQKARKEACGDNEEK). The stretch at 388–464 (TIANAEKSQK…ACGDNEEKME (77 aa)) forms a coiled coil. A compositionally biased stretch (polar residues) spans 470–490 (SSDAQKPSTSSSDLTAEQLQD). The 166-residue stretch at 570–735 (VTLYEKNLNG…WSLMHFLMPT (166 aa)) folds into the Helicase ATP-binding domain. ATP is bound at residue 583–590 (DEMGLGKT). The interval 963–982 (AQPLQNGNSIPQNAPNRPQT) is disordered. The region spanning 1196–1342 (LLRQLYLYKH…ELAIDEAGFT (147 aa)) is the Helicase C-terminal domain. Positions 1452–1476 (KPEFEEECKEAEALIDQKREEWDKN) form a coiled coil. 5 disordered regions span residues 1615–1706 (ESAA…EEPD), 1977–2073 (SIQH…RRNA), 2092–2143 (QSGK…PQQR), 2276–2306 (QMRSNNGGGVGGQGGLQGGPGGPQGIRRPLV), and 2350–2395 (MQMP…PPQN). 2 stretches are compositionally biased toward low complexity: residues 1647–1669 (QQPTTTATTTTTVPQQQQQQQQQ) and 1981–1995 (LQSSSTGLGSQQNLQ). The segment covering 1996–2019 (NSHNSEQRNNVQNMHQNQYNSSQN) has biased composition (polar residues). Low complexity-rich tracts occupy residues 2051-2073 (LVQQGSQQQQQQQQQATLQRRNA) and 2092-2114 (QSGKNCGQGQSFVVMGSQSSSND). The span at 2115 to 2129 (GQGGASTVGGGGGGS) shows a compositional bias: gly residues. Low complexity predominate over residues 2130–2142 (QQPHQQQQQQPQQ). A compositionally biased stretch (gly residues) spans 2281 to 2299 (NGGGVGGQGGLQGGPGGPQ). Residues 2361–2377 (QQQAPPQSSQQASQQAP) are compositionally biased toward low complexity.

The protein belongs to the SNF2/RAD54 helicase family. SWR1 subfamily.

It localises to the nucleus. Functionally, probable catalytic component of a chromatin-remodeling complex which mediates the ATP-dependent exchange of histone H2A variant H2AV/htz-1 for H2A, leading to transcriptional regulation of selected genes by chromatin remodeling. Involved in foregut development, and may be involved in vulval development. The sequence is that of Helicase ssl-1 (ssl-1) from Caenorhabditis elegans.